The primary structure comprises 79 residues: uncharacterized protein (79 aa).

This is an uncharacterized protein from Saccharomyces cerevisiae (strain ATCC 204508 / S288c) (Baker's yeast).